Reading from the N-terminus, the 210-residue chain is Probable GTP-binding protein EngB (210 aa).

One can recognise an EngB-type G domain in the interval 30–204 (QGYEVAFAGR…YRVLADWMEL (175 aa)). GTP-binding positions include 38–45 (GRSNAGKS), 64–68 (GRTQL), 82–85 (DLPG), 149–152 (TKAD), and 182–185 (LFSA). Mg(2+) contacts are provided by Ser-45 and Thr-66.

Belongs to the TRAFAC class TrmE-Era-EngA-EngB-Septin-like GTPase superfamily. EngB GTPase family. The cofactor is Mg(2+).

Its function is as follows. Necessary for normal cell division and for the maintenance of normal septation. This chain is Probable GTP-binding protein EngB, found in Pseudomonas putida (strain ATCC 700007 / DSM 6899 / JCM 31910 / BCRC 17059 / LMG 24140 / F1).